A 106-amino-acid polypeptide reads, in one-letter code: Large ribosomal subunit protein bL21 (106 aa).

The protein belongs to the bacterial ribosomal protein bL21 family. In terms of assembly, part of the 50S ribosomal subunit. Contacts protein L20.

Its function is as follows. This protein binds to 23S rRNA in the presence of protein L20. The polypeptide is Large ribosomal subunit protein bL21 (Streptomyces griseus subsp. griseus (strain JCM 4626 / CBS 651.72 / NBRC 13350 / KCC S-0626 / ISP 5235)).